Consider the following 315-residue polypeptide: Probable cell division protein WhiA (315 aa).

A DNA-binding region (H-T-H motif) is located at residues 274–308; the sequence is SLKNLGELIPGGPISKSGINHRLRKLNEIAEKIRA.

This sequence belongs to the WhiA family.

Functionally, involved in cell division and chromosome segregation. This is Probable cell division protein WhiA from Ligilactobacillus salivarius (strain UCC118) (Lactobacillus salivarius).